The chain runs to 87 residues: MVNMKASMFLTFAGLVLLFVVCYASESEEKEFPKEMLSSIFAVDNDFKQEERDCAGYMRECKEKLCCSGYVCPSRWKWCVLPAPWRR.

The first 24 residues, M1 to A24, serve as a signal peptide directing secretion. A propeptide spanning residues S25 to R52 is cleaved from the precursor. Cystine bridges form between C54–C67, C61–C72, and C66–C79.

The protein belongs to the neurotoxin 10 (Hwtx-1) family. 51 (Hntx-8) subfamily. Hntx-8 sub-subfamily. Expressed by the venom gland.

It is found in the secreted. In terms of biological role, ion channel inhibitor. The protein is U3-theraphotoxin-Hhn1d of Cyriopagopus hainanus (Chinese bird spider).